We begin with the raw amino-acid sequence, 310 residues long: tRNA dimethylallyltransferase (310 aa).

11-18 (GPTGVGKT) contacts ATP. 13 to 18 (TGVGKT) serves as a coordination point for substrate.

Belongs to the IPP transferase family. In terms of assembly, monomer. Mg(2+) serves as cofactor.

It carries out the reaction adenosine(37) in tRNA + dimethylallyl diphosphate = N(6)-dimethylallyladenosine(37) in tRNA + diphosphate. Functionally, catalyzes the transfer of a dimethylallyl group onto the adenine at position 37 in tRNAs that read codons beginning with uridine, leading to the formation of N6-(dimethylallyl)adenosine (i(6)A). This Latilactobacillus sakei subsp. sakei (strain 23K) (Lactobacillus sakei subsp. sakei) protein is tRNA dimethylallyltransferase.